The following is a 330-amino-acid chain: Succinylglutamate desuccinylase (330 aa).

3 residues coordinate Zn(2+): H53, E56, and H147. E210 is an active-site residue.

Belongs to the AspA/AstE family. Succinylglutamate desuccinylase subfamily. The cofactor is Zn(2+).

The catalysed reaction is N-succinyl-L-glutamate + H2O = L-glutamate + succinate. It participates in amino-acid degradation; L-arginine degradation via AST pathway; L-glutamate and succinate from L-arginine: step 5/5. Transforms N(2)-succinylglutamate into succinate and glutamate. The polypeptide is Succinylglutamate desuccinylase (Yersinia enterocolitica serotype O:8 / biotype 1B (strain NCTC 13174 / 8081)).